The following is a 355-amino-acid chain: Zinc finger A20 and AN1 domain-containing stress-associated protein 3 (355 aa).

The segment at 199–233 adopts an A20-type zinc-finger fold; sequence AGQPVLCASGCGFYGNPATLDMCSVCYRQHCLLNG. Positions 205, 209, 221, 224, 295, 298, 309, 311, 316, 319, 325, and 327 each coordinate Zn(2+). The segment at 289–335 adopts an AN1-type zinc-finger fold; sequence KAPANRCASCKKKVGLLGFACRCGATYCGTHRYPEKHACGFDFKGAS.

May be involved in environmental stress response. The chain is Zinc finger A20 and AN1 domain-containing stress-associated protein 3 (SAP3) from Oryza sativa subsp. japonica (Rice).